We begin with the raw amino-acid sequence, 376 residues long: Actin (376 aa).

It belongs to the actin family.

It is found in the cytoplasm. It localises to the cytoskeleton. It catalyses the reaction ATP + H2O = ADP + phosphate + H(+). Actins are highly conserved proteins that are involved in various types of cell motility and are ubiquitously expressed in all eukaryotic cells. The protein is Actin of Trypanosoma cruzi.